The primary structure comprises 150 residues: Ankyrin repeat protein C18/B24 (150 aa).

One copy of the ANK repeat lies at E41–S73.

The sequence is that of Ankyrin repeat protein C18/B24 from Vaccinia virus (strain Copenhagen) (VACV).